The sequence spans 275 residues: Elongation factor Ts (275 aa).

The interval 76–79 (TDFV) is involved in Mg(2+) ion dislocation from EF-Tu.

It belongs to the EF-Ts family.

Its subcellular location is the cytoplasm. In terms of biological role, associates with the EF-Tu.GDP complex and induces the exchange of GDP to GTP. It remains bound to the aminoacyl-tRNA.EF-Tu.GTP complex up to the GTP hydrolysis stage on the ribosome. The polypeptide is Elongation factor Ts (Rhodococcus jostii (strain RHA1)).